The primary structure comprises 1175 residues: Pyruvate carboxylase (1175 aa).

The Biotin carboxylation domain maps to 22–474 (NANKILVANR…WTTFIDDTPS (453 aa)). ATP is bound by residues lysine 140, glutamate 224, and histidine 259. In terms of domain architecture, ATP-grasp spans 144–341 (RNLAGKCNVP…IVAAQIQIAA (198 aa)). Arginine 316 is a catalytic residue. The region spanning 561–828 (CLIMDTTWRD…NTGITEQNAR (268 aa)) is the Pyruvate carboxyltransferase domain. Substrate contacts are provided by residues 569–573 (RDAHQ) and arginine 642. A divalent metal cation is bound at residue aspartate 570. Lysine 738, histidine 768, and histidine 770 together coordinate a divalent metal cation. Lysine 738 bears the N6-carboxylysine mark. Substrate is bound at residue threonine 902. In terms of domain architecture, Biotinyl-binding spans 1099-1174 (KADAHNPNEV…DAGDLICKIT (76 aa)). At lysine 1140 the chain carries N6-biotinyllysine.

Biotin serves as cofactor. Zn(2+) is required as a cofactor.

It is found in the cytoplasm. It catalyses the reaction hydrogencarbonate + pyruvate + ATP = oxaloacetate + ADP + phosphate + H(+). Its pathway is carbohydrate biosynthesis; gluconeogenesis. Its function is as follows. Pyruvate carboxylase catalyzes a 2-step reaction, involving the ATP-dependent carboxylation of the covalently attached biotin in the first step and the transfer of the carboxyl group to pyruvate in the second. This is Pyruvate carboxylase (PYC) from Pichia angusta (Yeast).